Here is a 227-residue protein sequence, read N- to C-terminus: Translation initiation factor 6 (227 aa).

It belongs to the eIF-6 family.

Its function is as follows. Binds to the 50S ribosomal subunit and prevents its association with the 30S ribosomal subunit to form the 70S initiation complex. This chain is Translation initiation factor 6, found in Methanococcus maripaludis (strain C5 / ATCC BAA-1333).